Here is a 199-residue protein sequence, read N- to C-terminus: MARVLVLYYSSYGHIEKMAEAIAEGARGAGAQVDIKRVPETVPEEIAKKANFKLDQQAPIATVADLEQYDAIVVGTGTRYGRISSQMAAFLDQTGGLWMRGALNGKVGAAFASTATQHGGQETTLFSIITNLMHLGMIIVGLPYSHQGMMNMTEIVGGAPYGATTIAAGDGSRQPSAIDLEGARHQGELVAKTAAKLFG.

In terms of domain architecture, Flavodoxin-like spans 4-190 (VLVLYYSSYG…EGARHQGELV (187 aa)). Residues 10–15 (SSYGHI) and 78–80 (TRY) each bind FMN. Tyr12 is a binding site for NAD(+). Trp98 provides a ligand contact to substrate. Residues 113-119 (STATQHG) and His134 each bind FMN.

The protein belongs to the WrbA family. It depends on FMN as a cofactor.

The enzyme catalyses a quinone + NADH + H(+) = a quinol + NAD(+). It carries out the reaction a quinone + NADPH + H(+) = a quinol + NADP(+). The chain is NAD(P)H dehydrogenase (quinone) from Paraburkholderia phymatum (strain DSM 17167 / CIP 108236 / LMG 21445 / STM815) (Burkholderia phymatum).